Consider the following 82-residue polypeptide: U-actitoxin-Oulsp2 (82 aa).

A signal peptide spans 1–21 (MNTKLVVVFLLSAILFVSVTA). Positions 22 to 46 (SRPGKDLERDEAYETYDDERPYFKR) are excised as a propeptide. Residues 48–82 (CKDNLPAATCSNVKANNNCSSEKYKTNCAKTCGEC) form the ShKT domain. 3 disulfides stabilise this stretch: Cys-48/Cys-82, Cys-57/Cys-75, and Cys-66/Cys-79. A theoritically crucial for binding to potassium channels region spans residues 70 to 71 (KY).

This sequence belongs to the sea anemone type 1 potassium channel toxin family. Type 1b subfamily.

The protein resides in the secreted. It localises to the nematocyst. Its function is as follows. Probable toxin with unknown function. In contrast to similar toxins, this toxin does not inhibit voltage-gated potassium channels (tested at 100 nM). Does not show antimicrobial activities against bacteria and yeasts. The sequence is that of U-actitoxin-Oulsp2 from Oulactis sp. (Sea anemone).